The sequence spans 204 residues: Somatotropin (204 aa).

Residues Met1–Ser17 form the signal peptide. Pyrrolidone carboxylic acid is present on Gln18. Zn(2+) is bound at residue His36. An intrachain disulfide couples Cys69 to Cys177. Glu186 provides a ligand contact to Zn(2+). Residues Cys194 and Cys202 are joined by a disulfide bond.

This sequence belongs to the somatotropin/prolactin family.

The protein localises to the secreted. Growth hormone plays an important role in growth control and involved in the regulation of several anabolic processes. The protein is Somatotropin (gh) of Perca flavescens (American yellow perch).